We begin with the raw amino-acid sequence, 214 residues long: External core antigen (214 aa).

Positions 1 to 19 (MQLFHLCLIISCTCPTVQA) are cleaved as a signal peptide. The interval 25 to 27 (GWL) is HBEAG. A disordered region spans residues 165–214 (NAPILSTLPETTVVRRRDRGRSPRRRTPSPRRRRSPSPRRRRSQSRESQC). Residues 178-207 (VRRRDRGRSPRRRTPSPRRRRSPSPRRRRS) are compositionally biased toward basic residues. The 1; half-length repeat unit spans residues 186–192 (SPRRRTP). The interval 186–208 (SPRRRTPSPRRRRSPSPRRRRSQ) is 3 X 8 AA repeats of S-P-R-R-R-R-S-[PQ]. Positions 186 to 214 (SPRRRTPSPRRRRSPSPRRRRSQSRESQC) are excised as a propeptide. 2 tandem repeats follow at residues 193–200 (SPRRRRSP) and 201–208 (SPRRRRSQ).

This sequence belongs to the orthohepadnavirus precore antigen family. As to quaternary structure, homodimerizes. Phosphorylated. Post-translationally, cleaved by host furin.

It localises to the secreted. The protein localises to the host nucleus. Functionally, may regulate immune response to the intracellular capsid in acting as a T-cell tolerogen, by having an immunoregulatory effect which prevents destruction of infected cells by cytotoxic T-cells. This immune regulation may predispose to chronicity during perinatal infections and prevent severe liver injury during adult infections. The sequence is that of External core antigen from Hepatitis B virus genotype A2 subtype adw2 (strain Rutter 1979) (HBV-A).